Consider the following 237-residue polypeptide: HTH-type transcriptional regulator GmuR (237 aa).

The region spanning 1-69 (MNKYEIIANE…RGHGTFIIQS (69 aa)) is the HTH gntR-type domain. The segment at residues 29-48 (EVSLAKEFNSSRMTMKRALD) is a DNA-binding region (H-T-H motif).

The protein localises to the cytoplasm. Transcriptional repressor of the gmuBACDREFG operon which is involved in the uptake and degradation of glucomannan. This Bacillus subtilis (strain 168) protein is HTH-type transcriptional regulator GmuR (gmuR).